The sequence spans 388 residues: Xylose isomerase (388 aa).

Active-site residues include His-54 and Asp-57. Residues Glu-181, Glu-217, His-220, Asp-245, Asp-255, Asp-257, and Asp-287 each contribute to the Mg(2+) site.

It belongs to the xylose isomerase family. In terms of assembly, homotetramer. Requires Mg(2+) as cofactor.

The protein resides in the cytoplasm. It catalyses the reaction alpha-D-xylose = alpha-D-xylulofuranose. This Streptomyces olivaceoviridis (Streptomyces corchorusii) protein is Xylose isomerase.